The following is a 397-amino-acid chain: Subtilisin-like protease 3 (397 aa).

Residues 1–19 (MGCIKVISVFLAAIAAVDA) form the signal peptide. Residues 20–116 (RAFFHNRGGS…VEHDRVVKLA (97 aa)) constitute a propeptide that is removed on maturation. The 82-residue stretch at 35-116 (SYIVVMKDGV…VEHDRVVKLA (82 aa)) folds into the Inhibitor I9 domain. The Peptidase S8 domain maps to 126 to 397 (TWGLGRVSHR…NRLLYNGSGQ (272 aa)). Catalysis depends on charge relay system residues Asp158 and His189. Asn250 carries an N-linked (GlcNAc...) asparagine glycan. Ser344 acts as the Charge relay system in catalysis. Residue Asn393 is glycosylated (N-linked (GlcNAc...) asparagine).

This sequence belongs to the peptidase S8 family.

It is found in the secreted. In terms of biological role, secreted subtilisin-like serine protease with keratinolytic activity that contributes to pathogenicity. The chain is Subtilisin-like protease 3 (SUB3) from Trichophyton equinum (Horse ringworm fungus).